Reading from the N-terminus, the 254-residue chain is Probable transcriptional regulator ycf27 (254 aa).

Positions 16–129 constitute a Response regulatory domain; the sequence is KVLIVDDEAS…ELEARIRAVL (114 aa). 4-aspartylphosphate is present on aspartate 65. A DNA-binding region (H-T-H motif) is located at residues 85–103; sequence DVPIIMLTALGDVADRITG. Positions 144-245 form a DNA-binding region, ompR/PhoB-type; the sequence is SGIINFNFLT…ARGTGYLFQR (102 aa).

The protein localises to the plastid. Its subcellular location is the chloroplast. Functionally, probable promoter-specific protein mediating the interaction between DNA and RNA polymerase. The sequence is that of Probable transcriptional regulator ycf27 (ycf27) from Guillardia theta (Cryptophyte).